The primary structure comprises 512 residues: Bestrophin-2 (512 aa).

The Cytoplasmic portion of the chain corresponds to 1 to 31 (MTVTYTARVAKARFGGFSKLLLLWRGSIYKL). Position 10 (A10) interacts with Ca(2+). The helical transmembrane segment at 32-51 (LWRELLCFLGLFMALSAAYR) threads the bilayer. Topologically, residues 52 to 60 (FVLTEEQKR) are extracellular. A helical transmembrane segment spans residues 61-82 (YFEKLVLYCDRYASLIPVSFVL). Topologically, residues 83 to 238 (GFYVTLVVHR…WISVPLVYTQ (156 aa)) are cytoplasmic. A helical transmembrane segment spans residues 239–255 (VVTIAVYSYFLACLIGR). The Extracellular segment spans residues 256 to 274 (QFLDPAQGYKDHDLDLCVP). The helical transmembrane segment at 275-288 (IFTLLQFFFYAGWL) threads the bilayer. The Cytoplasmic portion of the chain corresponds to 289–512 (KVAEQLINPF…PIGEEEESLA (224 aa)). 4 residues coordinate Ca(2+): Q293, N296, D301, and D304. The tract at residues 453–512 (VDLGQPEPESEPITGPESPALVPAPRAPSEPLTVVPLSGTRGPAPPWLPSPIGEEEESLA) is disordered.

The protein belongs to the anion channel-forming bestrophin (TC 1.A.46) family. Calcium-sensitive chloride channel subfamily. Pentamer. Interacts with GLUL; this interaction tethers a fraction of GLUL to the membrane, causing a decrease of cytosolic glutamine synthase (GS) activity and inhibits the chloride channel activity of BEST2 by affecting the gating at the aperture in the absence of intracellular glutamate.

It is found in the cell membrane. The protein localises to the basolateral cell membrane. It carries out the reaction chloride(in) = chloride(out). It catalyses the reaction iodide(out) = iodide(in). The enzyme catalyses hydrogencarbonate(in) = hydrogencarbonate(out). The catalysed reaction is L-glutamate(out) = L-glutamate(in). It carries out the reaction L-glutamine(out) = L-glutamine(in). Its activity is regulated as follows. Chloride channel activity is allosterically inhibited by GLUL/glutamine synthase (GS) which affects the gating at the aperture in the absence of intracellular glutamate. Inhibitory effect of GLUL is relieved upon increasing of intracellular level of L-glutamate. Its function is as follows. Ligand-gated anion channel that allows the movement of anions across cell membranes when activated by calcium (Ca2+). Transports a large specter of anions, namely mediates the movement of chloride, L-glutamate and iodide. Calcium-binding triggers the dilation of the aperture, but calcium-dependent gating is only effective when the size of the passing anion is bigger than the closed aperture. Mediates the calcium-activated hydrogencarbonate movement and participates in colonic hydrogencarbonate secretion concomitant with mucin secretion. In non-pigmented epithelium (NPE), mediates the efflux of intracellular L-glutamate; binding of intracellular L-glutamate activates and open both the neck and the aperture of the channel, leading to L-glutamate exit promoting chloride influx movement from the extracellular side in trans. Also exhibits a directional permeability for intracellular glutamine, in a similar manner as for L-glutamate. The chain is Bestrophin-2 from Bos taurus (Bovine).